Here is a 107-residue protein sequence, read N- to C-terminus: DNA-directed RNA polymerase subunit omega (107 aa).

The protein belongs to the RNA polymerase subunit omega family. In terms of assembly, the RNAP catalytic core consists of 2 alpha, 1 beta, 1 beta' and 1 omega subunit. When a sigma factor is associated with the core the holoenzyme is formed, which can initiate transcription.

It carries out the reaction RNA(n) + a ribonucleoside 5'-triphosphate = RNA(n+1) + diphosphate. Promotes RNA polymerase assembly. Latches the N- and C-terminal regions of the beta' subunit thereby facilitating its interaction with the beta and alpha subunits. The polypeptide is DNA-directed RNA polymerase subunit omega (Oenococcus oeni (strain ATCC BAA-331 / PSU-1)).